Here is a 153-residue protein sequence, read N- to C-terminus: 3-hydroxyacyl-[acyl-carrier-protein] dehydratase FabZ (153 aa).

His-56 is an active-site residue.

Belongs to the thioester dehydratase family. FabZ subfamily.

It localises to the cytoplasm. It catalyses the reaction a (3R)-hydroxyacyl-[ACP] = a (2E)-enoyl-[ACP] + H2O. Involved in unsaturated fatty acids biosynthesis. Catalyzes the dehydration of short chain beta-hydroxyacyl-ACPs and long chain saturated and unsaturated beta-hydroxyacyl-ACPs. This is 3-hydroxyacyl-[acyl-carrier-protein] dehydratase FabZ from Nitrosomonas europaea (strain ATCC 19718 / CIP 103999 / KCTC 2705 / NBRC 14298).